The chain runs to 216 residues: UPF0134 protein MPN_344 (216 aa).

Residues 47-62 (FTIIEDQQDRPDKPEE) are compositionally biased toward basic and acidic residues. 2 disordered regions span residues 47 to 104 (FTII…PKPD) and 194 to 216 (GKMDKMESRMDKMETRLDKLESK). Pro residues predominate over residues 68–78 (IPKPPKPPKGP). The segment covering 83 to 93 (EPGQPGGPDDP) has biased composition (low complexity).

The protein belongs to the UPF0134 family.

The protein is UPF0134 protein MPN_344 of Mycoplasma pneumoniae (strain ATCC 29342 / M129 / Subtype 1) (Mycoplasmoides pneumoniae).